The sequence spans 87 residues: SGAEVFGNNCSSCHVNGGNIIIPGHVLSQSAMEEYLDGGYTKEAIEYQVRNGKGPMPAWEGVLDESEIKEVTDYVYSQASGPWANAS.

Heme c is bound by residues C10, C13, H14, and M56.

This sequence belongs to the cytochrome c family. PetJ subfamily. As to quaternary structure, monomer. Binds 1 heme c group covalently per subunit.

Its subcellular location is the plastid. The protein resides in the chloroplast thylakoid lumen. Its function is as follows. Functions as an electron carrier between membrane-bound cytochrome b6-f and photosystem I in oxygenic photosynthesis. The polypeptide is Cytochrome c6 (petJ) (Euglena viridis (Cercaria viridis)).